Consider the following 444-residue polypeptide: Transmembrane protein with metallophosphoesterase domain (444 aa).

5 helical membrane-spanning segments follow: residues 7-27 (LSLG…MIVS), 43-63 (LFRL…SIYI), 87-107 (MVVA…IFLV), 114-134 (FSLV…FLCV), and 162-182 (LALR…VGLL). D214, H216, D246, N277, H382, and H384 together coordinate a divalent metal cation.

This sequence belongs to the metallophosphoesterase superfamily. LOC643853 family. A divalent metal cation serves as cofactor.

Its subcellular location is the membrane. This is Transmembrane protein with metallophosphoesterase domain (TMPPE) from Bos taurus (Bovine).